Consider the following 150-residue polypeptide: Phosphopantetheine adenylyltransferase (150 aa).

Position 10 (Ser10) interacts with substrate. ATP is bound by residues 10 to 11 and His18; that span reads SF. Substrate is bound by residues Lys42, Thr74, and Arg88. ATP-binding positions include 89–91, Glu99, and 124–130; these read GLR and LAYISSS.

This sequence belongs to the bacterial CoaD family. In terms of assembly, homohexamer. The cofactor is Mg(2+).

The protein localises to the cytoplasm. It carries out the reaction (R)-4'-phosphopantetheine + ATP + H(+) = 3'-dephospho-CoA + diphosphate. Its pathway is cofactor biosynthesis; coenzyme A biosynthesis; CoA from (R)-pantothenate: step 4/5. In terms of biological role, reversibly transfers an adenylyl group from ATP to 4'-phosphopantetheine, yielding dephospho-CoA (dPCoA) and pyrophosphate. The sequence is that of Phosphopantetheine adenylyltransferase from Cytophaga hutchinsonii (strain ATCC 33406 / DSM 1761 / CIP 103989 / NBRC 15051 / NCIMB 9469 / D465).